An 804-amino-acid polypeptide reads, in one-letter code: Phenylalanine--tRNA ligase beta subunit (804 aa).

A tRNA-binding domain is found at 39-155 (AEGLKKIVVG…ADVKPGEEVY (117 aa)). Positions 408–483 (RNPSVVKTTV…RIYGYDNLKS (76 aa)) constitute a B5 domain. 4 residues coordinate Mg(2+): Asp461, Asp467, Glu470, and Glu471. In terms of domain architecture, FDX-ACB spans 711–804 (PKFPAIERDL…LKESLKIKVR (94 aa)).

It belongs to the phenylalanyl-tRNA synthetase beta subunit family. Type 1 subfamily. Tetramer of two alpha and two beta subunits. Mg(2+) serves as cofactor.

The protein resides in the cytoplasm. It carries out the reaction tRNA(Phe) + L-phenylalanine + ATP = L-phenylalanyl-tRNA(Phe) + AMP + diphosphate + H(+). The chain is Phenylalanine--tRNA ligase beta subunit from Lactobacillus johnsonii (strain CNCM I-12250 / La1 / NCC 533).